A 514-amino-acid chain; its full sequence is Bifunctional purine biosynthesis protein PurH (514 aa).

The MGS-like domain occupies 1–143; that stretch reads MTRRALISVS…KNHAGVLVLV (143 aa).

It belongs to the PurH family.

The catalysed reaction is (6R)-10-formyltetrahydrofolate + 5-amino-1-(5-phospho-beta-D-ribosyl)imidazole-4-carboxamide = 5-formamido-1-(5-phospho-D-ribosyl)imidazole-4-carboxamide + (6S)-5,6,7,8-tetrahydrofolate. It catalyses the reaction IMP + H2O = 5-formamido-1-(5-phospho-D-ribosyl)imidazole-4-carboxamide. It functions in the pathway purine metabolism; IMP biosynthesis via de novo pathway; 5-formamido-1-(5-phospho-D-ribosyl)imidazole-4-carboxamide from 5-amino-1-(5-phospho-D-ribosyl)imidazole-4-carboxamide (10-formyl THF route): step 1/1. Its pathway is purine metabolism; IMP biosynthesis via de novo pathway; IMP from 5-formamido-1-(5-phospho-D-ribosyl)imidazole-4-carboxamide: step 1/1. The sequence is that of Bifunctional purine biosynthesis protein PurH from Deinococcus geothermalis (strain DSM 11300 / CIP 105573 / AG-3a).